Consider the following 578-residue polypeptide: Isocitrate dehydrogenase kinase/phosphatase (578 aa).

ATP-binding positions include 315-321 (APGIRGM) and Lys-336. Asp-371 is a catalytic residue.

This sequence belongs to the AceK family.

It localises to the cytoplasm. It carries out the reaction L-seryl-[isocitrate dehydrogenase] + ATP = O-phospho-L-seryl-[isocitrate dehydrogenase] + ADP + H(+). Functionally, bifunctional enzyme which can phosphorylate or dephosphorylate isocitrate dehydrogenase (IDH) on a specific serine residue. This is a regulatory mechanism which enables bacteria to bypass the Krebs cycle via the glyoxylate shunt in response to the source of carbon. When bacteria are grown on glucose, IDH is fully active and unphosphorylated, but when grown on acetate or ethanol, the activity of IDH declines drastically concomitant with its phosphorylation. This is Isocitrate dehydrogenase kinase/phosphatase from Shigella dysenteriae serotype 1 (strain Sd197).